A 328-amino-acid chain; its full sequence is tRNA U34 carboxymethyltransferase (328 aa).

Carboxy-S-adenosyl-L-methionine is bound by residues K91, W105, K110, G130, 181–182 (IE), M196, Y200, and R315.

It belongs to the class I-like SAM-binding methyltransferase superfamily. CmoB family. Homotetramer.

It catalyses the reaction carboxy-S-adenosyl-L-methionine + 5-hydroxyuridine(34) in tRNA = 5-carboxymethoxyuridine(34) in tRNA + S-adenosyl-L-homocysteine + H(+). Its function is as follows. Catalyzes carboxymethyl transfer from carboxy-S-adenosyl-L-methionine (Cx-SAM) to 5-hydroxyuridine (ho5U) to form 5-carboxymethoxyuridine (cmo5U) at position 34 in tRNAs. The polypeptide is tRNA U34 carboxymethyltransferase (Pectobacterium carotovorum subsp. carotovorum (strain PC1)).